The chain runs to 318 residues: Beta-galactosidase small subunit (318 aa).

This sequence belongs to the bacterial beta-galactosidase small subunit family. In terms of assembly, heterodimer of a large (LacL) and a small subunit (LacM).

The catalysed reaction is Hydrolysis of terminal non-reducing beta-D-galactose residues in beta-D-galactosides.. In terms of biological role, component of a beta-galactosidase. This is Beta-galactosidase small subunit from Latilactobacillus sakei (Lactobacillus sakei).